The chain runs to 515 residues: Bifunctional purine biosynthesis protein PurH (515 aa).

In terms of domain architecture, MGS-like spans 1-144; sequence MGRKALISVS…KNHKFVTIIV (144 aa).

It belongs to the PurH family.

It catalyses the reaction (6R)-10-formyltetrahydrofolate + 5-amino-1-(5-phospho-beta-D-ribosyl)imidazole-4-carboxamide = 5-formamido-1-(5-phospho-D-ribosyl)imidazole-4-carboxamide + (6S)-5,6,7,8-tetrahydrofolate. It carries out the reaction IMP + H2O = 5-formamido-1-(5-phospho-D-ribosyl)imidazole-4-carboxamide. Its pathway is purine metabolism; IMP biosynthesis via de novo pathway; 5-formamido-1-(5-phospho-D-ribosyl)imidazole-4-carboxamide from 5-amino-1-(5-phospho-D-ribosyl)imidazole-4-carboxamide (10-formyl THF route): step 1/1. It participates in purine metabolism; IMP biosynthesis via de novo pathway; IMP from 5-formamido-1-(5-phospho-D-ribosyl)imidazole-4-carboxamide: step 1/1. This chain is Bifunctional purine biosynthesis protein PurH, found in Persephonella marina (strain DSM 14350 / EX-H1).